Here is a 345-residue protein sequence, read N- to C-terminus: uncharacterized protein (345 aa).

Transmembrane regions (helical) follow at residues 23–43 (VVGF…YSYV) and 56–76 (FLIA…FVAL). A disordered region spans residues 326-345 (VTEPTTNSKRKPVKAKKAKK). Residues 333–345 (SKRKPVKAKKAKK) are compositionally biased toward basic residues.

It is found in the cell membrane. This is an uncharacterized protein from Mycoplasma pneumoniae (strain ATCC 29342 / M129 / Subtype 1) (Mycoplasmoides pneumoniae).